The chain runs to 360 residues: Phospho-N-acetylmuramoyl-pentapeptide-transferase (360 aa).

A run of 10 helical transmembrane segments spans residues 27 to 47 (IVSL…MIAW), 73 to 93 (TMGG…WANL), 94 to 114 (SNPY…VGFV), 132 to 152 (WKYF…YSIG), 168 to 188 (VMPQ…VGTS), 199 to 219 (GLAI…AWAT), 236 to 256 (ASEL…FLWF), 263 to 283 (VFMG…IAVL), 288 to 308 (FLLV…ILQV), and 338 to 358 (VIVR…ATLK).

It belongs to the glycosyltransferase 4 family. MraY subfamily. Requires Mg(2+) as cofactor.

The protein resides in the cell inner membrane. It carries out the reaction UDP-N-acetyl-alpha-D-muramoyl-L-alanyl-gamma-D-glutamyl-meso-2,6-diaminopimeloyl-D-alanyl-D-alanine + di-trans,octa-cis-undecaprenyl phosphate = di-trans,octa-cis-undecaprenyl diphospho-N-acetyl-alpha-D-muramoyl-L-alanyl-D-glutamyl-meso-2,6-diaminopimeloyl-D-alanyl-D-alanine + UMP. The protein operates within cell wall biogenesis; peptidoglycan biosynthesis. Functionally, catalyzes the initial step of the lipid cycle reactions in the biosynthesis of the cell wall peptidoglycan: transfers peptidoglycan precursor phospho-MurNAc-pentapeptide from UDP-MurNAc-pentapeptide onto the lipid carrier undecaprenyl phosphate, yielding undecaprenyl-pyrophosphoryl-MurNAc-pentapeptide, known as lipid I. The polypeptide is Phospho-N-acetylmuramoyl-pentapeptide-transferase (Pectobacterium atrosepticum (strain SCRI 1043 / ATCC BAA-672) (Erwinia carotovora subsp. atroseptica)).